We begin with the raw amino-acid sequence, 445 residues long: KIN17-like protein (445 aa).

Residues 26-50 form a C2H2-type zinc finger; it reads WYCQLCEKQCRDENGFKCHISSESH. Composition is skewed to low complexity over residues 215–229 and 239–253; these read NTTT…TTTN and NDNN…DQTN. Positions 215–256 are disordered; the sequence is NTTTTTTNTTTTTTNKNIFDKLKTNDNNSSNNNYNDQTNPKP.

It belongs to the KIN17 family.

The polypeptide is KIN17-like protein (Dictyostelium discoideum (Social amoeba)).